Here is a 208-residue protein sequence, read N- to C-terminus: Mitochondrial import inner membrane translocase subunit Tim23 (208 aa).

Transmembrane regions (helical) follow at residues 73-93 (FELA…FGTL), 125-145 (ASWA…GVAI), and 173-193 (GLKG…LYAL).

Belongs to the Tim17/Tim22/Tim23 family. In terms of assembly, component of the TIM23 complex at least composed of timm23, timm17 and timm50. The complex interacts with the timm44 component of the PAM complex.

It is found in the mitochondrion inner membrane. In terms of biological role, essential component of the TIM23 complex, a complex that mediates the translocation of transit peptide-containing proteins across the mitochondrial inner membrane. Plays an essential role in early embryonic development. The polypeptide is Mitochondrial import inner membrane translocase subunit Tim23 (timm23) (Danio rerio (Zebrafish)).